Consider the following 694-residue polypeptide: Frizzled-8 (694 aa).

Residues 1 to 27 (MEWGYLLEVTSLLAALALLQRSSGAAA) form the signal peptide. Over 28-275 (ASAKELACQE…NPFFSQDERA (248 aa)) the chain is Extracellular. An FZ domain is found at 30–151 (AKELACQEIT…GNPDTLCMDY (122 aa)). Disulfide bonds link Cys35–Cys96, Cys43–Cys89, Cys80–Cys118, Cys107–Cys148, and Cys111–Cys135. N-linked (GlcNAc...) asparagine glycosylation occurs at Asn49. 71-78 (QFWPLVEI) is a binding site for hexadecanoate. A wnt-binding region spans residues 95-100 (ICLEDY). A wnt-binding region spans residues 147-152 (LCMDYN). N-linked (GlcNAc...) asparagine glycosylation occurs at Asn152. The interval 155–226 (DLTTAAPSPP…KARPPGGGAA (72 aa)) is disordered. The segment covering 161 to 175 (PSPPRRLPPPPPGEQ) has biased composition (pro residues). Residues 176-186 (PPSGSGHGRPP) are compositionally biased toward low complexity. Positions 210–225 (RGGGGGGKARPPGGGA) are enriched in gly residues. The helical transmembrane segment at 276–296 (FTVFWIGLWSVLCFVSTFATV) threads the bilayer. Residues 297 to 312 (STFLIDMERFKYPERP) are Cytoplasmic-facing. A helical membrane pass occupies residues 313–333 (IIFLSACYLFVSVGYLVRLVA). Topologically, residues 334–396 (GHEKVACSGG…RYETTGPALC (63 aa)) are extracellular. A helical membrane pass occupies residues 397 to 417 (TVVFLLVYFFGMASSIWWVIL). Over 418-439 (SLTWFLAAGMKWGNEAIAGYSQ) the chain is Cytoplasmic. The chain crosses the membrane as a helical span at residues 440-460 (YFHLAAWLVPSVKSIAVLALS). Residues 461–483 (SVDGDPVAGICYVGNQSLDNLRG) are Extracellular-facing. The N-linked (GlcNAc...) asparagine glycan is linked to Asn475. A helical transmembrane segment spans residues 484-504 (FVLAPLVIYLFIGTMFLLAGF). Topologically, residues 505-532 (VSLFRIRSVIKQQDGPTKTHKLEKLMIR) are cytoplasmic. The helical transmembrane segment at 533-553 (LGLFTVLYTVPAAVVVACLFY) threads the bilayer. Over 554–584 (EQHNRPRWEATHNCPCLRDLQPDQARRPDYA) the chain is Extracellular. The chain crosses the membrane as a helical span at residues 585–605 (VFMLKYFMCLVVGITSGVWVW). Over 606 to 694 (SGKTLESWRS…YPKQMPLSQV (89 aa)) the chain is Cytoplasmic. The short motif at 608–613 (KTLESW) is the Lys-Thr-X-X-X-Trp motif, mediates interaction with the PDZ domain of Dvl family members element. Gly residues predominate over residues 648–664 (GGGGPGGGGGPGGGGGS). Positions 648–668 (GGGGPGGGGGPGGGGGSLYSD) are disordered. The PDZ-binding signature appears at 692–694 (SQV).

It belongs to the G-protein coupled receptor Fz/Smo family. Component of a Wnt-signaling complex that contains a WNT protein, a FZD protein and LRP5 or LRP6. Interacts directly with LRP5 or LRP6; the interaction is promoted by Wnt-binding and signaling and inhibited by DKK1. Interacts with GPOC, RSPO1 and RSPO3. Interacts with glypican GPC3. In terms of processing, ubiquitinated by ZNRF3, leading to its degradation by the proteasome. In terms of tissue distribution, most abundant in fetal kidney, followed by brain and lung. In adult tissues, expressed in kidney, heart, pancreas and skeletal muscle.

The protein localises to the membrane. Its subcellular location is the golgi apparatus. It is found in the cell membrane. Receptor for Wnt proteins. Component of the Wnt-Fzd-LRP5-LRP6 complex that triggers beta-catenin signaling through inducing aggregation of receptor-ligand complexes into ribosome-sized signalosomes. The beta-catenin canonical signaling pathway leads to the activation of disheveled proteins, inhibition of GSK-3 kinase, nuclear accumulation of beta-catenin and activation of Wnt target genes. A second signaling pathway involving PKC and calcium fluxes has been seen for some family members, but it is not yet clear if it represents a distinct pathway or if it can be integrated in the canonical pathway, as PKC seems to be required for Wnt-mediated inactivation of GSK-3 kinase. Both pathways seem to involve interactions with G-proteins. May be involved in transduction and intercellular transmission of polarity information during tissue morphogenesis and/or in differentiated tissues. Coreceptor along with RYK of Wnt proteins, such as WNT1. This Homo sapiens (Human) protein is Frizzled-8 (FZD8).